Reading from the N-terminus, the 636-residue chain is 1-deoxy-D-xylulose-5-phosphate synthase (636 aa).

Thiamine diphosphate contacts are provided by residues histidine 73 and 114–116 (SHA). Aspartate 146 contacts Mg(2+). Residues 147–148 (GA), asparagine 176, tyrosine 287, and glutamate 368 contribute to the thiamine diphosphate site. Asparagine 176 contributes to the Mg(2+) binding site.

It belongs to the transketolase family. DXPS subfamily. As to quaternary structure, homodimer. It depends on Mg(2+) as a cofactor. The cofactor is thiamine diphosphate.

It carries out the reaction D-glyceraldehyde 3-phosphate + pyruvate + H(+) = 1-deoxy-D-xylulose 5-phosphate + CO2. It participates in metabolic intermediate biosynthesis; 1-deoxy-D-xylulose 5-phosphate biosynthesis; 1-deoxy-D-xylulose 5-phosphate from D-glyceraldehyde 3-phosphate and pyruvate: step 1/1. In terms of biological role, catalyzes the acyloin condensation reaction between C atoms 2 and 3 of pyruvate and glyceraldehyde 3-phosphate to yield 1-deoxy-D-xylulose-5-phosphate (DXP). The polypeptide is 1-deoxy-D-xylulose-5-phosphate synthase (Corynebacterium glutamicum (strain ATCC 13032 / DSM 20300 / JCM 1318 / BCRC 11384 / CCUG 27702 / LMG 3730 / NBRC 12168 / NCIMB 10025 / NRRL B-2784 / 534)).